A 107-amino-acid polypeptide reads, in one-letter code: Inner membrane protein YiaW (107 aa).

Over 1–6 (MFLDYF) the chain is Cytoplasmic. The helical transmembrane segment at 7-29 (ALGVLIFVFLVIFYGIIILHDIP) threads the bilayer. Residues 30–43 (YLIAKKRNHPHADA) lie on the Periplasmic side of the membrane. Residues 44–66 (IHVAGWVSLFTLHVIWPFLWIWA) traverse the membrane as a helical segment. Residues 67-107 (TLYRPERGWGMQSHDSSVMQLQQRIAGLEKQLADIKSSSAE) lie on the Cytoplasmic side of the membrane.

It to E.coli YibI.

The protein localises to the cell inner membrane. This Escherichia coli O157:H7 protein is Inner membrane protein YiaW (yiaW).